We begin with the raw amino-acid sequence, 124 residues long: Glycine cleavage system H protein (124 aa).

Positions 22–103 constitute a Lipoyl-binding domain; that stretch reads VFVVGITDNA…AYTAWIFKIK (82 aa). An N6-lipoyllysine modification is found at Lys-63.

Belongs to the GcvH family. The glycine cleavage system is composed of four proteins: P, T, L and H. (R)-lipoate serves as cofactor.

In terms of biological role, the glycine cleavage system catalyzes the degradation of glycine. The H protein shuttles the methylamine group of glycine from the P protein to the T protein. The chain is Glycine cleavage system H protein from Bordetella pertussis (strain Tohama I / ATCC BAA-589 / NCTC 13251).